The sequence spans 86 residues: Neuropeptide precursor capa-1 (86 aa).

The signal sequence occupies residues 1–19 (MLLWIVATLLIFSLPVSTA).

In terms of tissue distribution, expressed in two pairs of neurons in the anterior part of the nervous system (at protein level).

Encodes at least three neuropeptides: two of the periviscerokinin family (APHPSSALLVPYPRV-amide and LYMARV-amide) and one pyrokinin (AFFYTPRI-amide). Its function is as follows. Putative ligand for neuromedin U receptor homolog nmur-2. The sequence is that of Neuropeptide precursor capa-1 from Caenorhabditis elegans.